Consider the following 143-residue polypeptide: Sirohydrochlorin cobaltochelatase (143 aa).

The active-site Proton acceptor is the H9. H9 contacts Co(2+). H9 lines the Ni(2+) pocket. Residues E45 and 70-75 (LAHGNH) each bind substrate. Residue H75 coordinates Co(2+). H75 lines the Ni(2+) pocket.

Belongs to the CbiX family. CbiXS subfamily. As to quaternary structure, homotetramer; dimer of dimers.

The enzyme catalyses Co-sirohydrochlorin + 2 H(+) = sirohydrochlorin + Co(2+). It carries out the reaction Ni-sirohydrochlorin + 2 H(+) = sirohydrochlorin + Ni(2+). The protein operates within cofactor biosynthesis; adenosylcobalamin biosynthesis; cob(II)yrinate a,c-diamide from sirohydrochlorin (anaerobic route): step 1/10. Its function is as follows. Catalyzes the insertion of Co(2+) into sirohydrochlorin as part of the anaerobic pathway to cobalamin biosynthesis. Involved in the biosynthesis of the unique nickel-containing tetrapyrrole coenzyme F430, the prosthetic group of methyl-coenzyme M reductase (MCR), which plays a key role in methanogenesis and anaerobic methane oxidation. Catalyzes the insertion of Ni(2+) into sirohydrochlorin to yield Ni-sirohydrochlorin. The chain is Sirohydrochlorin cobaltochelatase from Methanococcus aeolicus (strain ATCC BAA-1280 / DSM 17508 / OCM 812 / Nankai-3).